A 639-amino-acid chain; its full sequence is Probable methyltransferase PMT18 (639 aa).

Residues 1-19 lie on the Cytoplasmic side of the membrane; the sequence is MAKENSSHSLAEAKRKRLT. Residues 20 to 42 traverse the membrane as a helical; Signal-anchor for type II membrane protein segment; that stretch reads WILCVSGLCILSYVLGSWQTNTV. A disordered region spans residues 41–86; sequence TVPTSSSEAYSRMGCDETSTTTRAQTTQTQTNPSSDDTSSSLSSSE. Residues 43-639 lie on the Lumenal side of the membrane; sequence PTSSSEAYSR…VKSYWTGPSS (597 aa). The span at 58–85 shows a compositional bias: low complexity; it reads TSTTTRAQTTQTQTNPSSDDTSSSLSSS. N-linked (GlcNAc...) asparagine glycosylation is found at Asn104 and Asn427.

It belongs to the methyltransferase superfamily.

It localises to the endoplasmic reticulum membrane. The chain is Probable methyltransferase PMT18 from Arabidopsis thaliana (Mouse-ear cress).